We begin with the raw amino-acid sequence, 943 residues long: Isoleucine--tRNA ligase (943 aa).

The 'HIGH' region motif lies at 58-68 (PYANGTIHIGH). Position 567 (Glu-567) interacts with L-isoleucyl-5'-AMP. The short motif at 608-612 (KMSKS) is the 'KMSKS' region element. Lys-611 is a binding site for ATP. Residues Cys-906, Cys-909, Cys-926, and Cys-929 each coordinate Zn(2+).

This sequence belongs to the class-I aminoacyl-tRNA synthetase family. IleS type 1 subfamily. In terms of assembly, monomer. Zn(2+) serves as cofactor.

The protein localises to the cytoplasm. It carries out the reaction tRNA(Ile) + L-isoleucine + ATP = L-isoleucyl-tRNA(Ile) + AMP + diphosphate. In terms of biological role, catalyzes the attachment of isoleucine to tRNA(Ile). As IleRS can inadvertently accommodate and process structurally similar amino acids such as valine, to avoid such errors it has two additional distinct tRNA(Ile)-dependent editing activities. One activity is designated as 'pretransfer' editing and involves the hydrolysis of activated Val-AMP. The other activity is designated 'posttransfer' editing and involves deacylation of mischarged Val-tRNA(Ile). The polypeptide is Isoleucine--tRNA ligase (Pseudomonas fluorescens (strain SBW25)).